Reading from the N-terminus, the 298-residue chain is GTPase Era (298 aa).

The Era-type G domain maps to 3–170 (KSGFVAILGR…IKLLTDNLEE (168 aa)). A G1 region spans residues 11–18 (GRPNVGKS). 11 to 18 (GRPNVGKS) serves as a coordination point for GTP. Positions 37–41 (QTTRN) are G2. Residues 58–61 (DTPG) form a G3 region. GTP contacts are provided by residues 58 to 62 (DTPGI) and 120 to 123 (NKID). The G4 stretch occupies residues 120–123 (NKID). Residues 149-151 (ISA) form a G5 region. One can recognise a KH type-2 domain in the interval 201–279 (TQQEVPHSVA…YLETWVKVKK (79 aa)).

It belongs to the TRAFAC class TrmE-Era-EngA-EngB-Septin-like GTPase superfamily. Era GTPase family. In terms of assembly, monomer.

It is found in the cytoplasm. It localises to the cell membrane. Functionally, an essential GTPase that binds both GDP and GTP, with rapid nucleotide exchange. Plays a role in 16S rRNA processing and 30S ribosomal subunit biogenesis and possibly also in cell cycle regulation and energy metabolism. The sequence is that of GTPase Era from Streptococcus pyogenes serotype M4 (strain MGAS10750).